We begin with the raw amino-acid sequence, 459 residues long: MAP kinase-interacting serine/threonine-protein kinase 2 (459 aa).

The disordered stretch occupies residues 28 to 67; that stretch reads LDPAQHGDSDFSPQCEARPDMPSSQPIDIPDAKKRGRKKK. The Nuclear localization signal motif lies at 60–66; sequence KKRGRKK. Residue Ser74 is modified to Phosphoserine. The 285-residue stretch at 84–368 folds into the Protein kinase domain; it reads QLQEDVLGEG…AAQVLQHPWV (285 aa). Residues 90–98 and Lys113 contribute to the ATP site; that span reads LGEGAHARV. Staurosporine is bound at residue 160–162; that stretch reads EKM. Asp205 (proton acceptor) is an active-site residue. Glu209 is a staurosporine binding site. Phosphothreonine is present on residues Thr244 and Thr249. Zn(2+)-binding residues include Cys299, Cys311, and Cys314. Thr379 bears the Phosphothreonine mark. 2 positions are modified to phosphoserine: Ser431 and Ser434. Residues 438–442 carry the MAP kinase binding motif; it reads LAQRR. Ser446 carries the phosphoserine modification. The residue at position 450 (Thr450) is a Phosphothreonine.

Belongs to the protein kinase superfamily. CAMK Ser/Thr protein kinase family. In terms of assembly, monomer. Interacts with the C-terminal regions of EIF4G1 and EIF4G2; this interaction is promoted when MAPK pathways are repressed but repressed upon ERK proteins activation. Also binds to dephosphorylated MAPK3/ERK1 and MAPK1/ER2K. Interaction with phosphorylated MAPK3/ERK1 and MAPK1/ER2K protects it from dephosphorylation and inactivation. Interacts with ESR2 and EIF4E in the nucleus. The cofactor is Mg(2+). It depends on Zn(2+) as a cofactor. In terms of processing, dual phosphorylation of Thr-244 and Thr-249 activates the kinase. Phosphorylation of Thr-379 activates the kinase. Phosphorylated upon arsenic trioxide As(2)O(3) treatment. Phosphorylated by MAPK1/ERK2, MAPK11 and MAPK14. Dephosphorylated by PP2A.

It is found in the cytoplasm. Its subcellular location is the nucleus. The protein resides in the PML body. The catalysed reaction is L-seryl-[protein] + ATP = O-phospho-L-seryl-[protein] + ADP + H(+). The enzyme catalyses L-threonyl-[protein] + ATP = O-phospho-L-threonyl-[protein] + ADP + H(+). Inhibited by CGP57380 and staurosporine. Serine/threonine-protein kinase that phosphorylates SFPQ/PSF, HNRNPA1 and EIF4E. May play a role in the response to environmental stress and cytokines. Appears to regulate translation by phosphorylating EIF4E, thus increasing the affinity of this protein for the 7-methylguanosine-containing mRNA cap. Required for mediating PP2A-inhibition-induced EIF4E phosphorylation. Triggers EIF4E shuttling from cytoplasm to nucleus. Enhances the formation of EIF4F complex in pachytene spermatocytes, thus promoting mRNA translation during spermatogenesis. Displays a high basal kinase activity. Acts as a mediator of the suppressive effects of IFNgamma on hematopoiesis. Negative regulator for signals that control generation of arsenic trioxide As(2)O(3)-dependent apoptosis and anti-leukemic responses. Involved in anti-apoptotic signaling in response to serum withdrawal. The chain is MAP kinase-interacting serine/threonine-protein kinase 2 (Mknk2) from Rattus norvegicus (Rat).